Here is a 183-residue protein sequence, read N- to C-terminus: Cyanate hydratase (183 aa).

Catalysis depends on residues Arg-118, Glu-121, and Ser-144.

Belongs to the cyanase family.

It catalyses the reaction cyanate + hydrogencarbonate + 3 H(+) = NH4(+) + 2 CO2. Catalyzes the reaction of cyanate with bicarbonate to produce ammonia and carbon dioxide. This is Cyanate hydratase from Cryptococcus neoformans var. neoformans serotype D (strain B-3501A) (Filobasidiella neoformans).